The chain runs to 351 residues: Putative phospho-N-acetylmuramoyl-pentapeptide-transferase (351 aa).

10 helical membrane-spanning segments follow: residues 2–22, 44–64, 71–91, 158–178, 181–201, 212–232, 235–255, 258–278, 281–301, and 328–348; these read MEFLMVFIISTVSAAVFTLFI, AGTPTMGGLGMLLALLLVTVL, LVLTSLIVLTAAIVGLLDDLL, GEKILAQLLIGVFLVLSGAVG, GGFYLGLAAAPIAIAGMVGAI, GMAAGIMLIASLSCAIFLGLS, ALPFLALAGMCAGFLVFNRHP, IFMGDTGSFALGAGYATAVML, TVYFGVLAIAVPVVSVIVSLL, and IVLLYWLITLIVCALGLYMTG.

It belongs to the glycosyltransferase 4 family. MraY subfamily. It depends on Mg(2+) as a cofactor.

It is found in the cell membrane. It catalyses the reaction UDP-N-acetyl-alpha-D-muramoyl-L-alanyl-gamma-D-glutamyl-meso-2,6-diaminopimeloyl-D-alanyl-D-alanine + di-trans,octa-cis-undecaprenyl phosphate = di-trans,octa-cis-undecaprenyl diphospho-N-acetyl-alpha-D-muramoyl-L-alanyl-D-glutamyl-meso-2,6-diaminopimeloyl-D-alanyl-D-alanine + UMP. The protein is Putative phospho-N-acetylmuramoyl-pentapeptide-transferase of Methanothermobacter thermautotrophicus (strain ATCC 29096 / DSM 1053 / JCM 10044 / NBRC 100330 / Delta H) (Methanobacterium thermoautotrophicum).